Reading from the N-terminus, the 510-residue chain is Polyamine aminopropyltransferase 2 (510 aa).

The next 6 membrane-spanning stretches (helical) occupy residues 6–26, 38–58, 74–94, 102–122, 140–160, and 165–185; these read ALLV…ELIA, ILQF…GSWV, LELL…LLFA, LVLY…IPLV, VLTF…LVLA, and LVRT…WTLW. Residues 205–449 form the PABS domain; the sequence is AGMVGAALLA…GEWGFILAAP (245 aa). A spermidine synthase region spans residues 207–456; it reads MVGAALLAGF…AAPGRADFRP (250 aa). Gln244 is a binding site for S-methyl-5'-thioadenosine. Spermidine-binding residues include His274 and Asp298. S-methyl-5'-thioadenosine contacts are provided by residues Asp318 and 352-353; that span reads DA. Asp370 acts as the Proton acceptor in catalysis.

It belongs to the spermidine/spermine synthase family. In terms of assembly, homodimer or homotetramer.

The protein localises to the cell membrane. It carries out the reaction S-adenosyl 3-(methylsulfanyl)propylamine + putrescine = S-methyl-5'-thioadenosine + spermidine + H(+). Its pathway is amine and polyamine biosynthesis; spermidine biosynthesis; spermidine from putrescine: step 1/1. Its function is as follows. Catalyzes the irreversible transfer of a propylamine group from the amino donor S-adenosylmethioninamine (decarboxy-AdoMet) to putrescine (1,4-diaminobutane) to yield spermidine. This chain is Polyamine aminopropyltransferase 2, found in Ralstonia nicotianae (strain ATCC BAA-1114 / GMI1000) (Ralstonia solanacearum).